The chain runs to 163 residues: Phosphopantetheine adenylyltransferase (163 aa).

Thr-11 provides a ligand contact to substrate. ATP contacts are provided by residues 11–12 and His-19; that span reads TF. Substrate-binding residues include Lys-43, Leu-75, and Arg-89. ATP-binding positions include 90 to 92, Glu-100, and 125 to 131; these read GLR and YSFISST.

Belongs to the bacterial CoaD family. As to quaternary structure, homohexamer. The cofactor is Mg(2+).

It localises to the cytoplasm. It catalyses the reaction (R)-4'-phosphopantetheine + ATP + H(+) = 3'-dephospho-CoA + diphosphate. It participates in cofactor biosynthesis; coenzyme A biosynthesis; CoA from (R)-pantothenate: step 4/5. Its function is as follows. Reversibly transfers an adenylyl group from ATP to 4'-phosphopantetheine, yielding dephospho-CoA (dPCoA) and pyrophosphate. The polypeptide is Phosphopantetheine adenylyltransferase (Acinetobacter baumannii (strain ACICU)).